The following is a 147-amino-acid chain: D-aminoacyl-tRNA deacylase (147 aa).

The Gly-cisPro motif, important for rejection of L-amino acids signature appears at 136–137; the sequence is GP.

It belongs to the DTD family. In terms of assembly, homodimer.

It localises to the cytoplasm. It carries out the reaction glycyl-tRNA(Ala) + H2O = tRNA(Ala) + glycine + H(+). It catalyses the reaction a D-aminoacyl-tRNA + H2O = a tRNA + a D-alpha-amino acid + H(+). Its function is as follows. An aminoacyl-tRNA editing enzyme that deacylates mischarged D-aminoacyl-tRNAs. Also deacylates mischarged glycyl-tRNA(Ala), protecting cells against glycine mischarging by AlaRS. Acts via tRNA-based rather than protein-based catalysis; rejects L-amino acids rather than detecting D-amino acids in the active site. By recycling D-aminoacyl-tRNA to D-amino acids and free tRNA molecules, this enzyme counteracts the toxicity associated with the formation of D-aminoacyl-tRNA entities in vivo and helps enforce protein L-homochirality. The chain is D-aminoacyl-tRNA deacylase from Sulfurihydrogenibium sp. (strain YO3AOP1).